A 403-amino-acid polypeptide reads, in one-letter code: Synaptotagmin-7 (403 aa).

The Vesicular segment spans residues 1-16 (MYRDPEAASPGAPTRD). Residues 17–37 (VLLVSAIITVSLSVTIVLCGL) form a helical membrane-spanning segment. The Cytoplasmic segment spans residues 38–403 (CHWCQRKLGK…PVAQWHQLKA (366 aa)). Position 52 is a phosphoserine (Ser-52). A disordered region spans residues 53-103 (LETVGTPDSGRGRGEKKAIKLPAGGKAVNTAPVPGQTPHDESDRRTETRSS). A Phosphothreonine modification is found at Thr-58. Ser-61 is subject to Phosphoserine. Residues 90 to 100 (PHDESDRRTET) are compositionally biased toward basic and acidic residues. Phosphoserine occurs at positions 119 and 122. 2 C2 domains span residues 135–255 (NLGR…TFWK) and 266–399 (SRGE…AQWH). Asp-166 contacts Ca(2+). 2 positions are modified to asymmetric dimethylarginine: Gly-169 and Ser-171. The Ca(2+) site is built by Asp-172, Asp-225, Asp-227, Ser-230, Asp-233, Asp-297, Asp-303, Asp-357, Asp-359, Ser-362, and Asp-365.

The protein belongs to the synaptotagmin family. Homodimer. Can also form heterodimers with SYT6, SYT9 and SYT10. Interacts with calmodulin (CALM1, CALM2 or CALM3). Interacts with CD63; required for localization to lysosomes. Interacts with APP. Ca(2+) serves as cofactor. Post-translationally, palmitoylated at its vesicular N-terminus; palmitoylation is required for localization to lysosome and phagocytosis in macrophages. In terms of tissue distribution, widely expressed. Expressed in insulin-secreting cells. Present in glucagon-secreting cells (at protein level).

The protein localises to the cell membrane. Its subcellular location is the presynaptic cell membrane. It localises to the cytoplasmic vesicle. The protein resides in the secretory vesicle. It is found in the synaptic vesicle membrane. The protein localises to the lysosome membrane. Its subcellular location is the phagosome membrane. It localises to the peroxisome membrane. The protein resides in the secretory vesicle membrane. Its function is as follows. Ca(2+) sensor involved in Ca(2+)-dependent exocytosis of secretory and synaptic vesicles through Ca(2+) and phospholipid binding to the C2 domain. Ca(2+) induces binding of the C2-domains to phospholipid membranes and to assembled SNARE-complexes; both actions contribute to triggering exocytosis. SYT7 binds Ca(2+) with high affinity and slow kinetics compared to other synaptotagmins. Involved in Ca(2+)-triggered lysosomal exocytosis, a major component of the plasma membrane repair. Ca(2+)-regulated delivery of lysosomal membranes to the cell surface is also involved in the phagocytic uptake of particles by macrophages. Ca(2+)-triggered lysosomal exocytosis also plays a role in bone remodeling by regulating secretory pathways in osteoclasts and osteoblasts. Involved in cholesterol transport from lysosome to peroxisome by promoting membrane contacts between lysosomes and peroxisomes: probably acts by promoting vesicle fusion by binding phosphatidylinositol-4,5-bisphosphate on peroxisomal membranes. Acts as a key mediator of synaptic facilitation, a process also named short-term synaptic potentiation: synaptic facilitation takes place at synapses with a low initial release probability and is caused by influx of Ca(2+) into the axon terminal after spike generation, increasing the release probability of neurotransmitters. Probably mediates synaptic facilitation by directly increasing the probability of release. May also contribute to synaptic facilitation by regulating synaptic vesicle replenishment, a process required to ensure that synaptic vesicles are ready for the arrival of the next action potential: SYT7 is required for synaptic vesicle replenishment by acting as a sensor for Ca(2+) and by forming a complex with calmodulin. Also acts as a regulator of Ca(2+)-dependent insulin and glucagon secretion in beta-cells. Triggers exocytosis by promoting fusion pore opening and fusion pore expansion in chromaffin cells. Also regulates the secretion of some non-synaptic secretory granules of specialized cells. This is Synaptotagmin-7 from Mus musculus (Mouse).